The chain runs to 131 residues: Large ribosomal subunit protein bL12c (131 aa).

The tract at residues 107–131 (QGVSKDDAEASKKQLEDAGAKVKIS) is disordered. Residues 110–131 (SKDDAEASKKQLEDAGAKVKIS) are compositionally biased toward basic and acidic residues.

The protein belongs to the bacterial ribosomal protein bL12 family. As to quaternary structure, homodimer. Part of the ribosomal stalk of the 50S ribosomal subunit. Forms a multimeric L10(L12)X complex, where L10 forms an elongated spine to which 2 to 4 L12 dimers bind in a sequential fashion. Binds GTP-bound translation factors.

The protein resides in the plastid. Its subcellular location is the chloroplast. Functionally, forms part of the ribosomal stalk which helps the ribosome interact with GTP-bound translation factors. Is thus essential for accurate translation. The chain is Large ribosomal subunit protein bL12c from Chlorella vulgaris (Green alga).